The following is a 104-amino-acid chain: Large ribosomal subunit protein uL23 (104 aa).

The protein belongs to the universal ribosomal protein uL23 family. In terms of assembly, part of the 50S ribosomal subunit. Contacts protein L29, and trigger factor when it is bound to the ribosome.

Functionally, one of the early assembly proteins it binds 23S rRNA. One of the proteins that surrounds the polypeptide exit tunnel on the outside of the ribosome. Forms the main docking site for trigger factor binding to the ribosome. This Paraburkholderia phytofirmans (strain DSM 17436 / LMG 22146 / PsJN) (Burkholderia phytofirmans) protein is Large ribosomal subunit protein uL23.